Consider the following 140-residue polypeptide: Callisulfakinin (140 aa).

Residues 1 to 30 (MYSQQRIFNSKYFIFFIAVLSIFWLPTMSA) form the signal peptide. Positions 31-109 (RNLENSKNEN…LEYEDEDRSK (79 aa)) are excised as a propeptide. At tyrosine 114 the chain carries Sulfotyrosine. At phenylalanine 119 the chain carries Phenylalanine amide. Tyrosine 131 carries the post-translational modification Sulfotyrosine. At phenylalanine 136 the chain carries Phenylalanine amide. A propeptide spanning residues 139–140 (SI) is cleaved from the precursor.

Belongs to the gastrin/cholecystokinin family. In terms of tissue distribution, in brain, it is specifically expressed in four pairs of neurons. Not expressed in other cells of the brain and in the thoracico-abdominal ganglion.

The protein localises to the secreted. In terms of biological role, callisulfakinin I is a neuropeptide. The existence of Callisulfakinin II is uncertain. This is Callisulfakinin from Calliphora vomitoria (Blue bottle fly).